The primary structure comprises 88 residues: Elongation factor 1-beta (88 aa).

Belongs to the EF-1-beta/EF-1-delta family.

In terms of biological role, promotes the exchange of GDP for GTP in EF-1-alpha/GDP, thus allowing the regeneration of EF-1-alpha/GTP that could then be used to form the ternary complex EF-1-alpha/GTP/AAtRNA. This is Elongation factor 1-beta from Natronomonas pharaonis (strain ATCC 35678 / DSM 2160 / CIP 103997 / JCM 8858 / NBRC 14720 / NCIMB 2260 / Gabara) (Halobacterium pharaonis).